The chain runs to 1038 residues: MATMMHFGQFPSNIPLRAATCCTKVHSTLVTKEMMASSVKPAESSSVARPIIYSSAATDGYEKAQRAFEASFREKYSGKLEAMKYGKMVKKGGLTYVKRAGPQAIAKGIEMDAAIEKFNTAFNAGELENVTLEGDITAGISVARGESVWLRSVFWSRSLKKQARKKTPKLVAKSDFDDLFNKVLKVASLGNIPVEIVGKKANKILRCGYRRVNTSTIPYFHLPHHNSNYICRELHPQRVRWLVPLLVRHRKIRDQFSDSMIARGWSGLILPKYIASTCGRRYDEVIVRGRLYGRVEDARTKLPAGDVGRTMHYSSGEERFFAGWKEGFEKLVPAQKEHICKIVQDNKFCGKLAASIVQIAFPCHKMACDVCRNKFNEMTPEAYSELIDKHIDQRMNEINEAIVRFPGLKQVVSNFRSKHIASTNIKDNLEVAKLTQGHKANQMMQLARINSILIKGNTATPSEISDASGLLLEITRWFNNHLSVIDKGSLRAFRNKRSSKALVNPSLLCDNQRDKNGNFIWGERGYHSKRFFASHFDEVTPGDGYKEYIIRKGPQGQRKLAIGNLIVSFDLEKTRQALKGEEVEKLPLSNSCVSKRNGNYVYTSCCVTLDDGTPLYSNIKNPTKRHLVVGTTGDPKIVDLPATDTDKMYIAKEGYCYLNIFLAMLINVNENEAKAFTKMVRDIIIPMLGTWPTMQDLATACFMMTAFFPETSSAELPRILVDHTNQTMHVIDSFGSLTTGYHVLKAGTAAQLIDFASTELEGEMKWYRVGGHGLPVKEKMISALITSIFRPKKLVYLIEEDPYVLIMAMCSPRLIISLFNNGALELAAKHWISRDKNVSAIFAMLMDLSTEMSKAELLIEQHRMINECAKRVHDTQNYLDEVGPHQQEVRTFLALISDELEADKELHKTGFANFSERFHSLTEKNVCGRVRRGMARFKLVRQILLCHLCVQAQTAFNIRFAPEKVRRYRCQIRHIAQLVRWKDEGTPKWRPEVCYKPDHPIHELHQARYARQSHAHHVQLPKGPRILYECCLGDSFAH.

The 144-residue stretch at 170–313 (LVAKSDFDDL…AGDVGRTMHY (144 aa)) folds into the Peptidase S30 domain. Catalysis depends on for P1 proteinase activity residues histidine 224, glutamate 233, and serine 266. An Involved in interaction with stylet and aphid transmission motif is present at residues 365–368 (KMAC). The short motif at 622–624 (PTK) is the Involved in virions binding and aphid transmission element. Residues 648-770 (MYIAKEGYCY…EGEMKWYRVG (123 aa)) enclose the Peptidase C6 domain. Catalysis depends on for helper component proteinase activity residues cysteine 656 and histidine 729.

It belongs to the potyviridae P3N-PIPO polyprotein family. Interacts (via PIPO domain) with host PCaP1 protein; this interaction may help to anchor the movement complex to the plasma membrane from which the complex could move to the plasmodesmata. Post-translationally, potyviral RNA is expressed as two polyproteins which undergo post-translational proteolytic processing. Genome polyprotein is processed by NIa-pro, P1 and HC-pro proteinases resulting in the production of at least ten individual proteins. P3N-PIPO is cleaved by P1 and HC-pro proteinases resulting in the production of three individual proteins. The P1 proteinase and the HC-pro cleave only their respective C-termini autocatalytically.

It is found in the host cell junction. The protein resides in the host plasmodesma. It carries out the reaction Hydrolyzes a Gly-|-Gly bond at its own C-terminus, commonly in the sequence -Tyr-Xaa-Val-Gly-|-Gly, in the processing of the potyviral polyprotein.. Its function is as follows. Required for aphid transmission and also has proteolytic activity. Only cleaves a Gly-Gly dipeptide at its own C-terminus. Interacts with virions and aphid stylets. Acts as a suppressor of RNA-mediated gene silencing, also known as post-transcriptional gene silencing (PTGS), a mechanism of plant viral defense that limits the accumulation of viral RNAs. May have RNA-binding activity. Functionally, allows efficient cell to cell propagation, by bypassing the host cell wall barrier. Transports viral genome to neighboring plant cells directly through plasmosdesmata, without any budding. The chain is P3N-PIPO polyprotein from Beet mosaic virus (BtMV).